The primary structure comprises 334 residues: Mitochondrial ribosome-associated GTPase 1 (334 aa).

Residues Ala36–Pro209 enclose the CP-type G domain. Residues Asn83–Asp86, Asn153–Ser158, and Gly205 each bind GTP.

This sequence belongs to the TRAFAC class YlqF/YawG GTPase family. MTG1 subfamily. Associates with the mitochondrial ribosome large subunit; the association occurs in a GTP-dependent manner.

The protein localises to the mitochondrion inner membrane. Functionally, plays a role in the regulation of the mitochondrial ribosome assembly and of translational activity. Displays mitochondrial GTPase activity. This chain is Mitochondrial ribosome-associated GTPase 1 (MTG1), found in Homo sapiens (Human).